The following is a 157-amino-acid chain: Ribosomal RNA large subunit methyltransferase H (157 aa).

Residues L73, G105, and 124-129 (LSRMTF) each bind S-adenosyl-L-methionine.

The protein belongs to the RNA methyltransferase RlmH family. Homodimer.

It is found in the cytoplasm. The enzyme catalyses pseudouridine(1915) in 23S rRNA + S-adenosyl-L-methionine = N(3)-methylpseudouridine(1915) in 23S rRNA + S-adenosyl-L-homocysteine + H(+). Functionally, specifically methylates the pseudouridine at position 1915 (m3Psi1915) in 23S rRNA. The chain is Ribosomal RNA large subunit methyltransferase H from Porphyromonas gingivalis (strain ATCC BAA-308 / W83).